A 1802-amino-acid chain; its full sequence is Transposon Ty4-H Gag-Pol polyprotein (1802 aa).

A coiled-coil region spans residues 39–115 (RKVSIKDEQV…IQLLETNENN (77 aa)). The tract at residues 381-501 (NNNLSPVQNE…KTKMVLSRKY (121 aa)) is ty4 protease. Asp414 acts as the For protease activity; shared with dimeric partner in catalysis. The integrase-type zinc finger-like stretch occupies residues 539 to 599 (AIKPTSSPGF…EPNEFWCQTC (61 aa)). One can recognise an Integrase catalytic domain in the interval 619–786 (TDHEPGSSWC…LPLKAISRQP (168 aa)). Mg(2+) contacts are provided by Asp630 and Asp695. The tract at residues 1223 to 1248 (KRKRKRHDKNNSLTSYELERDKKRSK) is disordered. A Reverse transcriptase Ty1/copia-type domain is found at 1375–1510 (RNMFMKTLDI…DILGMDLVYN (136 aa)). Mg(2+)-binding residues include Asp1383, Asp1462, Asp1463, Asp1644, Glu1686, and Asp1720. Residues 1644-1790 (DASVGSEYDA…KRFIQVLKNK (147 aa)) enclose the RNase H Ty1/copia-type domain.

As to quaternary structure, the protease is a homodimer, whose active site consists of two apposed aspartic acid residues. Post-translationally, proteolytically processed into capsid protein (CA), Ty4 protease (PR), integrase (IN) and reverse transcriptase/ribonuclease H (RT) proteins. Initially, virus-like particles (VLPs) are composed of the structural unprocessed proteins Gag and Gag-Pol, and also contain the host initiator methionine tRNA (tRNA(i)-Met) which serves as a primer for minus-strand DNA synthesis, and a dimer of genomic Ty RNA. Processing of the polyproteins occurs within the particle and proceeds by an ordered pathway, called maturation. First, the protease (PR) is released by autocatalytic cleavage of the Gag-Pol polyprotein, and this cleavage is a prerequisite for subsequent processing at the remaining sites to release the mature structural and catalytic proteins. Maturation takes place prior to the RT reaction and is required to produce transposition-competent VLPs.

It is found in the cytoplasm. The protein resides in the nucleus. The enzyme catalyses DNA(n) + a 2'-deoxyribonucleoside 5'-triphosphate = DNA(n+1) + diphosphate. It carries out the reaction Endonucleolytic cleavage to 5'-phosphomonoester.. Its function is as follows. Capsid protein (CA) is the structural component of the virus-like particle (VLP), forming the shell that encapsulates the retrotransposons dimeric RNA genome. In terms of biological role, the aspartyl protease (PR) mediates the proteolytic cleavages of the Gag and Gag-Pol polyproteins after assembly of the VLP. Functionally, reverse transcriptase/ribonuclease H (RT) is a multifunctional enzyme that catalyzes the conversion of the retro-elements RNA genome into dsDNA within the VLP. The enzyme displays a DNA polymerase activity that can copy either DNA or RNA templates, and a ribonuclease H (RNase H) activity that cleaves the RNA strand of RNA-DNA heteroduplexes during plus-strand synthesis and hydrolyzes RNA primers. The conversion leads to a linear dsDNA copy of the retrotransposon that includes long terminal repeats (LTRs) at both ends. Integrase (IN) targets the VLP to the nucleus, where a subparticle preintegration complex (PIC) containing at least integrase and the newly synthesized dsDNA copy of the retrotransposon must transit the nuclear membrane. Once in the nucleus, integrase performs the integration of the dsDNA into the host genome. The chain is Transposon Ty4-H Gag-Pol polyprotein (TY4B-H) from Saccharomyces cerevisiae (strain ATCC 204508 / S288c) (Baker's yeast).